We begin with the raw amino-acid sequence, 370 residues long: Seipin (370 aa).

Residues 1 to 18 (MNILLRLIVFALDPLGLG) form the signal peptide. The Cytoplasmic portion of the chain corresponds to 19–55 (RRFLIRPAVNLGWNVYDRVRSKADEKVGTVRELVLRL). Residues 56 to 76 (GLIAFAVVLIIWLAVFMYAAF) form a helical membrane-spanning segment. Over 77 to 251 (YYVYMPAISH…GLRYIMFNWP (175 aa)) the chain is Lumenal. Residues 252-272 (VLSAIVAISTNLFFILVVFLL) form a helical membrane-spanning segment. Residues 273 to 370 (SWYHWSDAKW…RPTKKTTADH (98 aa)) lie on the Cytoplasmic side of the membrane. The tract at residues 346 to 370 (KSRSGKRESPDALRKRPTKKTTADH) is disordered. The segment covering 350–359 (GKRESPDALR) has biased composition (basic and acidic residues).

As to expression, widely expressed, with highest levels detected in fat body, moderate levels detected in salivary gland, midgut and muscle, and weak expression detected in brain.

The protein resides in the endoplasmic reticulum membrane. It is found in the lipid droplet. Functionally, acts as a tissue-autonomous lipid modulator, preventing ectopic lipid accumulation in salivary gland (a non-adipose tissue) and in promoting lipid storage in fat tissue. Required for the growth and maturation of small nascent lipid droplets (LDs) into larger mature LDs. This Drosophila melanogaster (Fruit fly) protein is Seipin.